The sequence spans 80 residues: YEEMVEFMEKNLLSVAYKIISSIEQKEESRICEGILRLLDSHLIPSSTAAESKSAQDIAAAELAPTHPIRDSTLIMQLLR.

Belongs to the 14-3-3 family.

This is 14-3-3-like protein 1 from Pseudotsuga menziesii (Douglas-fir).